The primary structure comprises 257 residues: Dihydroorotate dehydrogenase B (NAD(+)), electron transfer subunit (257 aa).

One can recognise an FAD-binding FR-type domain in the interval 2–100 (ILIEDLTVVS…MGPQGNGFDI (99 aa)). FAD-binding positions include 51–54 (RPIS), 68–70 (VYR), and 75–76 (GT). [2Fe-2S] cluster contacts are provided by cysteine 220, cysteine 225, cysteine 228, and cysteine 244.

Belongs to the PyrK family. As to quaternary structure, heterotetramer of 2 PyrK and 2 PyrD type B subunits. The cofactor is [2Fe-2S] cluster. FAD serves as cofactor.

Its pathway is pyrimidine metabolism; UMP biosynthesis via de novo pathway; orotate from (S)-dihydroorotate (NAD(+) route): step 1/1. Responsible for channeling the electrons from the oxidation of dihydroorotate from the FMN redox center in the PyrD type B subunit to the ultimate electron acceptor NAD(+). The sequence is that of Dihydroorotate dehydrogenase B (NAD(+)), electron transfer subunit from Streptococcus thermophilus (strain ATCC BAA-491 / LMD-9).